The sequence spans 107 residues: RNA polymerase II transcriptional coactivator KIWI (107 aa).

The disordered stretch occupies residues 1–40; that stretch reads MSSRGKRKDEDVRASDDESETHAPAKKVAKPADDSDQSDD. The span at 7–23 shows a compositional bias: basic and acidic residues; sequence RKDEDVRASDDESETHA.

It belongs to the transcriptional coactivator PC4 family.

It is found in the nucleus. Its function is as follows. General coactivator that functions cooperatively with TAFs and mediates functional interactions between upstream activators and the general transcriptional machinery. Binds single-stranded DNA. In Arabidopsis thaliana (Mouse-ear cress), this protein is RNA polymerase II transcriptional coactivator KIWI (KIWI).